Consider the following 382-residue polypeptide: Na(+)/H(+) antiporter NhaA (382 aa).

Transmembrane regions (helical) follow at residues 5–25 (INLL…ALAW), 42–62 (FGGV…FFGI), 88–108 (LATL…NAVI), 116–136 (GWGI…RLVF), 145–165 (FLLL…AVFY), 169–189 (VHPT…AAYI), 261–281 (IVVD…RFSS), 282–302 (VGTA…AGIL), 327–347 (TGLV…VAFV), and 353–373 (GAAK…VALG).

Belongs to the NhaA Na(+)/H(+) (TC 2.A.33) antiporter family.

The protein resides in the cell inner membrane. It carries out the reaction Na(+)(in) + 2 H(+)(out) = Na(+)(out) + 2 H(+)(in). Na(+)/H(+) antiporter that extrudes sodium in exchange for external protons. This chain is Na(+)/H(+) antiporter NhaA, found in Geobacter metallireducens (strain ATCC 53774 / DSM 7210 / GS-15).